A 619-amino-acid polypeptide reads, in one-letter code: Manganese lipoxygenase (619 aa).

Positions 1–16 (MRVLVWIAGLAPLAVA) are cleaved as a signal peptide. 6 N-linked (GlcNAc...) asparagine glycosylation sites follow: N32, N42, N62, N86, N164, and N229. The Lipoxygenase domain maps to 55 to 619 (TLPCEDGNST…PGNIPFYLSV (565 aa)). Residues H298, H303, H483, and N487 each coordinate Mn(2+). N-linked (GlcNAc...) asparagine glycans are attached at residues N515 and N549. V619 contacts Mn(2+).

This sequence belongs to the lipoxygenase family. Manganese lipoxygenase subfamily. The cofactor is Mn(2+).

The protein resides in the secreted. It catalyses the reaction (9Z,12Z)-octadecadienoate + O2 = (9S)-hydroperoxy-(10E,12Z)-octadecadienoate. It carries out the reaction (9Z,12Z)-octadecadienoate + O2 = (11S)-hydroperoxy-(9Z,12Z)-octadecadienoate. The enzyme catalyses (9Z,12Z)-octadecadienoate + O2 = (13R)-hydroperoxy-(9Z,11E)-octadecadienoate. The catalysed reaction is (9Z,12Z,15Z)-octadecatrienoate + O2 = (9S)-hydroperoxy-(10E,12Z,15Z)-octadecatrienoate. It catalyses the reaction (9Z,12Z,15Z)-octadecatrienoate + O2 = (11R)-hydroperoxy-(9Z,12Z,15Z)-octadecatrienoate. It carries out the reaction (9Z,12Z,15Z)-octadecatrienoate + O2 = (13R)-hydroperoxy-(9Z,11E,15Z)-octadecatrienoate. The enzyme catalyses (9S)-hydroperoxy-(10E,12Z,15Z)-octadecatrienoate + O2 = (9S,16S)-dihydroperoxy-(10E,12Z,14E)-octadecatrienoate. Its function is as follows. Lipoxygenase that metabolizes linoleic and alpha-linolenic acids to 9S-, 11- and 13R-hydroperoxy fatty acids. At the end of lipoxygenation, the intermediate product 11S-HPODE from linoleic acid is then transformed into 9S-HPODE and 13R-HPODE as the final products. The intermediate product 11R-HPOTrE from alpha-linolenic acid is transformed into 9S-HPOTrE and 13R-HPOTrE as the final products. 9S-HPOTrE is further oxidized by the enzyme to 9S,16S-DiHPOTrE as the end product. The protein is Manganese lipoxygenase of Pyricularia oryzae (strain 70-15 / ATCC MYA-4617 / FGSC 8958) (Rice blast fungus).